A 492-amino-acid polypeptide reads, in one-letter code: MDAMKYHDLRDFLTLLEQQGELKRITLPVDPHLEITEIADRTLRAGGPALLFENPKGYAMPVLCNLFGTPKRVAMGMGQDDVSALREVGKLLAFLKEPEPPKGFRDLFDKLPQFKQVLNMPTKRLRGAPCQQKIASGDDVDLTRLPVMTCWPDDAAPLITWGLTVTRGPHKERQNLGIYRQQLIGKNKLIMRWLSHRGGALDFQEWLAAHPGERFPVSVALGADPATILGAVTPVPDTLSEYAFAGLLRGTKTEVVKCLSNDLEVPASAEIILEGYIEPGEMAPEGPYGDHTGYYNEVDNFPVFTVTHITQREDAIYHSTYTGRPPDEPAVLGVALNEVFVPILQKQFPEIVDFYLPPEGCSYRLAVVTMKKQYAGHAKRVMMGVWSFLRQFMYTKFVIVCDDDVNARDWNDVIWAITTRMDPARDTVLVENTPIDYLDFASPVSGLGSKMGLDATNKWPGETQREWGRPIVKDPEVTARIDAIWDELAIFK.

Asparagine 175 is a binding site for Mn(2+). Prenylated FMN contacts are provided by residues 178-180, 192-194, and 197-198; these read IYR, RWL, and RG. Position 241 (glutamate 241) interacts with Mn(2+). Aspartate 290 (proton donor) is an active-site residue.

Belongs to the UbiD family. As to quaternary structure, homohexamer. It depends on prenylated FMN as a cofactor. Mn(2+) is required as a cofactor.

The protein localises to the cell membrane. It catalyses the reaction a 4-hydroxy-3-(all-trans-polyprenyl)benzoate + H(+) = a 2-(all-trans-polyprenyl)phenol + CO2. The protein operates within cofactor biosynthesis; ubiquinone biosynthesis. Catalyzes the decarboxylation of 3-octaprenyl-4-hydroxy benzoate to 2-octaprenylphenol, an intermediate step in ubiquinone biosynthesis. The sequence is that of 3-octaprenyl-4-hydroxybenzoate carboxy-lyase from Salmonella choleraesuis (strain SC-B67).